The sequence spans 192 residues: A-type ATP synthase subunit E (192 aa).

The protein belongs to the V-ATPase E subunit family. In terms of assembly, has multiple subunits with at least A(3), B(3), C, D, E, F, H, I and proteolipid K(x).

It is found in the cell membrane. In terms of biological role, component of the A-type ATP synthase that produces ATP from ADP in the presence of a proton gradient across the membrane. This chain is A-type ATP synthase subunit E, found in Methanoculleus marisnigri (strain ATCC 35101 / DSM 1498 / JR1).